The following is a 276-amino-acid chain: Rhamnulose-1-phosphate aldolase (276 aa).

E117 is an active-site residue. Zn(2+)-binding residues include H141, H143, and H212.

This sequence belongs to the aldolase class II family. RhaD subfamily. As to quaternary structure, homotetramer. Requires Zn(2+) as cofactor.

It localises to the cytoplasm. It carries out the reaction L-rhamnulose 1-phosphate = (S)-lactaldehyde + dihydroxyacetone phosphate. The protein operates within carbohydrate degradation; L-rhamnose degradation; glycerone phosphate from L-rhamnose: step 3/3. Functionally, catalyzes the reversible cleavage of L-rhamnulose-1-phosphate to dihydroxyacetone phosphate (DHAP) and L-lactaldehyde. The protein is Rhamnulose-1-phosphate aldolase of Klebsiella pneumoniae subsp. pneumoniae (strain ATCC 700721 / MGH 78578).